A 352-amino-acid chain; its full sequence is 3-isopropylmalate dehydrogenase (352 aa).

An NAD(+)-binding site is contributed by 76 to 89 (GYKWENLPHDKKPE). The substrate site is built by R96, R106, R134, and D220. Mg(2+) is bound by residues D220, D244, and D248. 277–289 (GSAPDIAGQNKAN) serves as a coordination point for NAD(+).

It belongs to the isocitrate and isopropylmalate dehydrogenases family. LeuB type 1 subfamily. In terms of assembly, homodimer. The cofactor is Mg(2+). Mn(2+) serves as cofactor.

The protein resides in the cytoplasm. The enzyme catalyses (2R,3S)-3-isopropylmalate + NAD(+) = 4-methyl-2-oxopentanoate + CO2 + NADH. It participates in amino-acid biosynthesis; L-leucine biosynthesis; L-leucine from 3-methyl-2-oxobutanoate: step 3/4. Catalyzes the oxidation of 3-carboxy-2-hydroxy-4-methylpentanoate (3-isopropylmalate) to 3-carboxy-4-methyl-2-oxopentanoate. The product decarboxylates to 4-methyl-2 oxopentanoate. This Chlorobaculum tepidum (strain ATCC 49652 / DSM 12025 / NBRC 103806 / TLS) (Chlorobium tepidum) protein is 3-isopropylmalate dehydrogenase.